The sequence spans 511 residues: Cobyric acid synthase (511 aa).

Residues 251 to 443 (LLDIAIICLP…IHGIFDNDVF (193 aa)) form the GATase cobBQ-type domain. The active-site Nucleophile is C332. H435 is a catalytic residue.

This sequence belongs to the CobB/CobQ family. CobQ subfamily.

The protein operates within cofactor biosynthesis; adenosylcobalamin biosynthesis. Its function is as follows. Catalyzes amidations at positions B, D, E, and G on adenosylcobyrinic A,C-diamide. NH(2) groups are provided by glutamine, and one molecule of ATP is hydrogenolyzed for each amidation. In Listeria monocytogenes serotype 4b (strain F2365), this protein is Cobyric acid synthase.